A 409-amino-acid chain; its full sequence is Elongation factor Tu, chloroplastic (409 aa).

In terms of domain architecture, tr-type G spans 10 to 214; the sequence is KPHVNIGTIG…KIDEYIPTPE (205 aa). The segment at 19 to 26 is G1; the sequence is GHVDHGKT. 19–26 lines the GTP pocket; that stretch reads GHVDHGKT. Thr26 provides a ligand contact to Mg(2+). The G2 stretch occupies residues 60–64; it reads GITIN. Residues 81–84 form a G3 region; it reads DCPG. Residues 81–85 and 136–139 contribute to the GTP site; these read DCPGH and NKAD. A G4 region spans residues 136–139; the sequence is NKAD. The interval 174-176 is G5; sequence SAL.

It belongs to the TRAFAC class translation factor GTPase superfamily. Classic translation factor GTPase family. EF-Tu/EF-1A subfamily.

The protein localises to the plastid. It localises to the chloroplast. It carries out the reaction GTP + H2O = GDP + phosphate + H(+). In terms of biological role, GTP hydrolase that promotes the GTP-dependent binding of aminoacyl-tRNA to the A-site of ribosomes during protein biosynthesis. The chain is Elongation factor Tu, chloroplastic (tufA) from Rhodomonas salina (Cryptomonas salina).